The primary structure comprises 339 residues: MIRAGIIGATGYTGLELVRLLKNHPEAKITYLSSRTYAGKKLEEIFPSTLENSILSEFDPEKVSKNCDVLFTALPAGASYDLVRELKGVKIIDLGADFRFDDPGVYREWYGKELSGYENIKRVYGLPELHREEIKNAQVVGNPGCYPTSVILALAPALKHNLVDPETILVDAKSGVSGAGRKEKVDYLFSEVNESLRPYNVAKHRHVPEMEQELGKISGKKVNVVFTPHLVPMTRGILSTIYVKTDKSLEEIHEAYLEFYKNEPFVHVLPMGIYPSTKWCYGSNHVFIGMQMEERTNTLILMSAIDNLVKGASGQAVQNMNIMFGLDETKGLEFTPIYP.

Residue cysteine 145 is part of the active site.

It belongs to the NAGSA dehydrogenase family. Type 1 subfamily.

It localises to the cytoplasm. It carries out the reaction N-acetyl-L-glutamate 5-semialdehyde + phosphate + NADP(+) = N-acetyl-L-glutamyl 5-phosphate + NADPH + H(+). Its pathway is amino-acid biosynthesis; L-arginine biosynthesis; N(2)-acetyl-L-ornithine from L-glutamate: step 3/4. Catalyzes the NADPH-dependent reduction of N-acetyl-5-glutamyl phosphate to yield N-acetyl-L-glutamate 5-semialdehyde. In Thermotoga maritima (strain ATCC 43589 / DSM 3109 / JCM 10099 / NBRC 100826 / MSB8), this protein is N-acetyl-gamma-glutamyl-phosphate reductase.